The primary structure comprises 355 residues: NADH-quinone oxidoreductase subunit H (355 aa).

Transmembrane regions (helical) follow at residues valine 25–tryptophan 45, tryptophan 91–isoleucine 111, leucine 126–alanine 146, methionine 170–valine 190, phenylalanine 205–isoleucine 225, methionine 253–alanine 273, phenylalanine 290–tryptophan 310, and valine 330–leucine 350.

It belongs to the complex I subunit 1 family. As to quaternary structure, NDH-1 is composed of 14 different subunits. Subunits NuoA, H, J, K, L, M, N constitute the membrane sector of the complex.

The protein resides in the cell inner membrane. The enzyme catalyses a quinone + NADH + 5 H(+)(in) = a quinol + NAD(+) + 4 H(+)(out). In terms of biological role, NDH-1 shuttles electrons from NADH, via FMN and iron-sulfur (Fe-S) centers, to quinones in the respiratory chain. The immediate electron acceptor for the enzyme in this species is believed to be ubiquinone. Couples the redox reaction to proton translocation (for every two electrons transferred, four hydrogen ions are translocated across the cytoplasmic membrane), and thus conserves the redox energy in a proton gradient. This subunit may bind ubiquinone. This is NADH-quinone oxidoreductase subunit H from Burkholderia cenocepacia (strain HI2424).